Here is a 628-residue protein sequence, read N- to C-terminus: Translation factor GUF1, mitochondrial (628 aa).

In terms of domain architecture, tr-type G spans 27–209; that stretch reads LPSRNFSIIA…AIISRIPPPS (183 aa). GTP contacts are provided by residues 36 to 43, 102 to 106, and 156 to 159; these read AHIDHGKS, DTPGH, and NKID.

It belongs to the TRAFAC class translation factor GTPase superfamily. Classic translation factor GTPase family. LepA subfamily.

It localises to the mitochondrion inner membrane. The enzyme catalyses GTP + H2O = GDP + phosphate + H(+). In terms of biological role, promotes mitochondrial protein synthesis. May act as a fidelity factor of the translation reaction, by catalyzing a one-codon backward translocation of tRNAs on improperly translocated ribosomes. Binds to mitochondrial ribosomes in a GTP-dependent manner. The sequence is that of Translation factor GUF1, mitochondrial from Laccaria bicolor (strain S238N-H82 / ATCC MYA-4686) (Bicoloured deceiver).